The following is a 124-amino-acid chain: Large ribosomal subunit protein bL12 (124 aa).

Belongs to the bacterial ribosomal protein bL12 family. In terms of assembly, homodimer. Part of the ribosomal stalk of the 50S ribosomal subunit. Forms a multimeric L10(L12)X complex, where L10 forms an elongated spine to which 2 to 4 L12 dimers bind in a sequential fashion. Binds GTP-bound translation factors.

Functionally, forms part of the ribosomal stalk which helps the ribosome interact with GTP-bound translation factors. Is thus essential for accurate translation. The sequence is that of Large ribosomal subunit protein bL12 from Burkholderia mallei (strain NCTC 10247).